The primary structure comprises 350 residues: tRNA uridine(34) hydroxylase (350 aa).

The 95-residue stretch at 146-240 (DDPDALFIDM…YARKAREQGL (95 aa)) folds into the Rhodanese domain. Catalysis depends on C200, which acts as the Cysteine persulfide intermediate.

Belongs to the TrhO family.

The enzyme catalyses uridine(34) in tRNA + AH2 + O2 = 5-hydroxyuridine(34) in tRNA + A + H2O. In terms of biological role, catalyzes oxygen-dependent 5-hydroxyuridine (ho5U) modification at position 34 in tRNAs, the first step in 5-carboxymethoxyuridine (cmo5U) biosynthesis. May be part of an alternate pathway, which is able to bypass cmo5U biogenesis in a subset of tRNAs under aerobic conditions. This chain is tRNA uridine(34) hydroxylase, found in Escherichia coli (strain SE11).